Consider the following 117-residue polypeptide: Anti-sigma F factor antagonist (117 aa).

The 111-residue stretch at 3-113 (LQIEMEHHRG…DNEVNALTEL (111 aa)) folds into the STAS domain. Ser-58 is subject to Phosphoserine.

This sequence belongs to the anti-sigma-factor antagonist family. Phosphorylated by SpoIIAB on a serine residue.

Functionally, in the phosphorylated form it could act as an anti-anti-sigma factor that counteracts SpoIIAB and thus releases sigma f from inhibition. The polypeptide is Anti-sigma F factor antagonist (spoIIAA) (Paenibacillus polymyxa (Bacillus polymyxa)).